We begin with the raw amino-acid sequence, 77 residues long: MKLMIFTGLFLFAIVSLIEAQAENEKPCLPEYKVCTHAPGNCCSDLVCDCYGRYKSGAQIGRNCFCLQKGVIYKREN.

The N-terminal stretch at 1 to 20 (MKLMIFTGLFLFAIVSLIEA) is a signal peptide. The propeptide occupies 21-26 (QAENEK).

It belongs to the neurotoxin 19 (CSTX) family. 08 (U8-Lctx) subfamily. In terms of processing, contains 4 disulfide bonds. Expressed by the venom gland.

The protein localises to the secreted. The polypeptide is U8-lycotoxin-Ls1m (Lycosa singoriensis (Wolf spider)).